We begin with the raw amino-acid sequence, 501 residues long: Cytochrome P450 71B23 (501 aa).

Residues 1–21 form a helical membrane-spanning segment; the sequence is MSIFLCFLLLLLLLLVTIIFT. Cysteine 443 contacts heme.

It belongs to the cytochrome P450 family. Heme serves as cofactor.

Its subcellular location is the membrane. The protein is Cytochrome P450 71B23 (CYP71B23) of Arabidopsis thaliana (Mouse-ear cress).